We begin with the raw amino-acid sequence, 148 residues long: Isotocin-neurophysin IT 2 (148 aa).

A signal peptide spans Met-1–Ala-20. The cysteines at positions 21 and 26 are disulfide-linked. Gly-29 is modified (glycine amide). Intrachain disulfides connect Cys-42/Cys-86, Cys-45/Cys-59, Cys-53/Cys-76, Cys-60/Cys-66, Cys-93/Cys-105, Cys-99/Cys-117, and Cys-106/Cys-111.

Belongs to the vasopressin/oxytocin family.

Functionally, isotocin causes contraction of smooth muscles. This is Isotocin-neurophysin IT 2 from Catostomus commersonii (White sucker).